Consider the following 436-residue polypeptide: 3-ketoacyl-CoA thiolase (436 aa).

Cys99 functions as the Acyl-thioester intermediate in the catalytic mechanism. Active-site proton acceptor residues include His392 and Cys422.

This sequence belongs to the thiolase-like superfamily. Thiolase family. As to quaternary structure, heterotetramer of two alpha chains (FadJ) and two beta chains (FadI).

The protein resides in the cytoplasm. The catalysed reaction is an acyl-CoA + acetyl-CoA = a 3-oxoacyl-CoA + CoA. It participates in lipid metabolism; fatty acid beta-oxidation. Functionally, catalyzes the final step of fatty acid oxidation in which acetyl-CoA is released and the CoA ester of a fatty acid two carbons shorter is formed. In Shewanella baltica (strain OS185), this protein is 3-ketoacyl-CoA thiolase.